The sequence spans 511 residues: Arabinose import ATP-binding protein AraG (511 aa).

ABC transporter domains follow at residues 5 to 240 (LEFR…MVGR) and 240 to 501 (RQID…LRPR). 37–44 (GENGAGKS) is a binding site for ATP.

Belongs to the ABC transporter superfamily. Arabinose importer (TC 3.A.1.2.2) family. In terms of assembly, the complex is composed of two ATP-binding proteins (AraG), two transmembrane proteins (AraH) and a solute-binding protein (AraF).

The protein resides in the cell inner membrane. It catalyses the reaction L-arabinose(out) + ATP + H2O = L-arabinose(in) + ADP + phosphate + H(+). Part of the ABC transporter complex AraFGH involved in arabinose import. Responsible for energy coupling to the transport system. This is Arabinose import ATP-binding protein AraG from Ralstonia nicotianae (strain ATCC BAA-1114 / GMI1000) (Ralstonia solanacearum).